A 182-amino-acid polypeptide reads, in one-letter code: MNKLTTKLVVAIGIGAALYGVLGLWGFSIAPNTFIKPALAILTVFGALFGPVAGLLIGLIGHTVTDTIAGWGIWWGWVISSGIIGLAMGLIQKRVGFSVKHGTYNNRDISYFTIAGLIGIVIAIIFAGSFDIIVMGEPFDKIVIQVLGATIADVIVFLVLGLPITIGLAKSNRKHTHLKIEK.

Transmembrane regions (helical) follow at residues 9–29 (VVAIGIGAALYGVLGLWGFSI), 40–60 (AILTVFGALFGPVAGLLIGLI), 71–91 (WGIWWGWVISSGIIGLAMGLI), 114–134 (IAGLIGIVIAIIFAGSFDIIV), and 142–162 (IVIQVLGATIADVIVFLVLGL).

This sequence belongs to the UPF0397 family.

It is found in the cell membrane. In Bacillus mycoides (strain KBAB4) (Bacillus weihenstephanensis), this protein is UPF0397 protein BcerKBAB4_2500.